Here is a 174-residue protein sequence, read N- to C-terminus: Crossover junction endodeoxyribonuclease RuvC (174 aa).

Residues D8, E67, and D139 contribute to the active site. Residues D8, E67, and D139 each coordinate Mg(2+).

Belongs to the RuvC family. As to quaternary structure, homodimer which binds Holliday junction (HJ) DNA. The HJ becomes 2-fold symmetrical on binding to RuvC with unstacked arms; it has a different conformation from HJ DNA in complex with RuvA. In the full resolvosome a probable DNA-RuvA(4)-RuvB(12)-RuvC(2) complex forms which resolves the HJ. Mg(2+) serves as cofactor.

Its subcellular location is the cytoplasm. The enzyme catalyses Endonucleolytic cleavage at a junction such as a reciprocal single-stranded crossover between two homologous DNA duplexes (Holliday junction).. Its function is as follows. The RuvA-RuvB-RuvC complex processes Holliday junction (HJ) DNA during genetic recombination and DNA repair. Endonuclease that resolves HJ intermediates. Cleaves cruciform DNA by making single-stranded nicks across the HJ at symmetrical positions within the homologous arms, yielding a 5'-phosphate and a 3'-hydroxyl group; requires a central core of homology in the junction. The consensus cleavage sequence is 5'-(A/T)TT(C/G)-3'. Cleavage occurs on the 3'-side of the TT dinucleotide at the point of strand exchange. HJ branch migration catalyzed by RuvA-RuvB allows RuvC to scan DNA until it finds its consensus sequence, where it cleaves and resolves the cruciform DNA. The sequence is that of Crossover junction endodeoxyribonuclease RuvC from Pseudomonas putida (strain ATCC 700007 / DSM 6899 / JCM 31910 / BCRC 17059 / LMG 24140 / F1).